The primary structure comprises 300 residues: F-box protein SKIP1 (300 aa).

The F-box; degenerate domain maps to 11 to 52; sequence LAPEILINIISRLTIQELWTGPMFVQKSWLTVCRDPYLWSIF.

Part of a SCF (ASK-cullin-F-box) protein ligase complex. Interacts with SKP1A/ASK1 and SKP1B/ASK2.

Its subcellular location is the nucleus. The protein operates within protein modification; protein ubiquitination. In terms of biological role, component of SCF(ASK-cullin-F-box) E3 ubiquitin ligase complexes, which may mediate the ubiquitination and subsequent proteasomal degradation of target proteins. In Arabidopsis thaliana (Mouse-ear cress), this protein is F-box protein SKIP1 (SKIP1).